The following is a 197-amino-acid chain: Nucleoside triphosphate pyrophosphatase (197 aa).

Asp-75 serves as the catalytic Proton acceptor.

This sequence belongs to the Maf family. Requires a divalent metal cation as cofactor.

The protein localises to the cytoplasm. It carries out the reaction a ribonucleoside 5'-triphosphate + H2O = a ribonucleoside 5'-phosphate + diphosphate + H(+). The enzyme catalyses a 2'-deoxyribonucleoside 5'-triphosphate + H2O = a 2'-deoxyribonucleoside 5'-phosphate + diphosphate + H(+). Its function is as follows. Nucleoside triphosphate pyrophosphatase. May have a dual role in cell division arrest and in preventing the incorporation of modified nucleotides into cellular nucleic acids. The polypeptide is Nucleoside triphosphate pyrophosphatase (Haemophilus ducreyi (strain 35000HP / ATCC 700724)).